The following is a 169-amino-acid chain: Oleosin Cor a 15 (169 aa).

2 helical membrane passes run Ile-38–Phe-58 and Pro-70–Val-90. The Proline-knot motif lies at Pro-70–Pro-81. 2 stretches are compositionally biased toward basic and acidic residues: residues Gln-122 to Gln-131 and Glu-160 to Thr-169. The tract at residues Gln-122–Thr-169 is disordered.

Belongs to the oleosin family. In terms of tissue distribution, expressed in seeds (at protein level).

The protein localises to the lipid droplet. The protein resides in the membrane. May have a structural role to stabilize the lipid body during desiccation of the seed by preventing coalescence of the oil. Probably interacts with both lipid and phospholipid moieties of lipid bodies. May also provide recognition signals for specific lipase anchorage in lipolysis during seedling growth. The sequence is that of Oleosin Cor a 15 from Corylus avellana (European hazel).